The sequence spans 82 residues: RNA-binding protein Hfq (82 aa).

One can recognise a Sm domain in the interval Asp9 to Val68.

The protein belongs to the Hfq family. In terms of assembly, homohexamer.

Functionally, RNA chaperone that binds small regulatory RNA (sRNAs) and mRNAs to facilitate mRNA translational regulation in response to envelope stress, environmental stress and changes in metabolite concentrations. Also binds with high specificity to tRNAs. The chain is RNA-binding protein Hfq from Pseudomonas aeruginosa.